Reading from the N-terminus, the 261-residue chain is Kallikrein-2 (261 aa).

Residues 1–18 (MWDLVLSIALSVGCTGAV) form the signal peptide. Residues 19 to 24 (PLIQSR) constitute a propeptide, activation peptide. Positions 25–258 (IVGGWECEKH…YRKWIKDTIA (234 aa)) constitute a Peptidase S1 domain. Cystine bridges form between Cys-31/Cys-173, Cys-50/Cys-66, Cys-152/Cys-219, Cys-184/Cys-198, and Cys-209/Cys-234. His-65 acts as the Charge relay system in catalysis. The N-linked (GlcNAc...) asparagine glycan is linked to Asn-102. Residue Asp-120 is the Charge relay system of the active site. Ser-213 serves as the catalytic Charge relay system.

It belongs to the peptidase S1 family. Kallikrein subfamily.

It catalyses the reaction Preferential cleavage of Arg-|-Xaa bonds in small molecule substrates. Highly selective action to release kallidin (lysyl-bradykinin) from kininogen involves hydrolysis of Met-|-Xaa or Leu-|-Xaa.. Functionally, glandular kallikreins cleave Met-Lys and Arg-Ser bonds in kininogen to release Lys-bradykinin. This chain is Kallikrein-2 (KLK2), found in Homo sapiens (Human).